We begin with the raw amino-acid sequence, 441 residues long: tRNA (guanine(37)-N(1))-methyltransferase (441 aa).

The N-terminal 9 residues, 1 to 9 (MFAPPAARA), are a transit peptide targeting the mitochondrion. Residues arginine 221, 248–249 (DL), 276–277 (DG), and asparagine 331 each bind S-adenosyl-L-methionine.

This sequence belongs to the class I-like SAM-binding methyltransferase superfamily. TRM5/TYW2 family. As to quaternary structure, monomer.

The protein localises to the mitochondrion matrix. The protein resides in the nucleus. Its subcellular location is the cytoplasm. The catalysed reaction is guanosine(37) in tRNA + S-adenosyl-L-methionine = N(1)-methylguanosine(37) in tRNA + S-adenosyl-L-homocysteine + H(+). Specifically methylates the N1 position of guanosine-37 in various cytoplasmic and mitochondrial tRNAs. Methylation is not dependent on the nature of the nucleoside 5' of the target nucleoside. This is the first step in the biosynthesis of wybutosine (yW), a modified base adjacent to the anticodon of tRNAs and required for accurate decoding. The chain is tRNA (guanine(37)-N(1))-methyltransferase from Phaeosphaeria nodorum (strain SN15 / ATCC MYA-4574 / FGSC 10173) (Glume blotch fungus).